The chain runs to 132 residues: MSHDTIADMISLVRNANMRKAVKVRVPATGITQNIVKILLQEGFIKDYMKQEKRTRSFFILTLKYQGRVRKPHITAFKRISKPSLRIYSNYQKITRILGGMGIAIISTSSGIMTDREARQKRLGGEIICHVW.

Belongs to the universal ribosomal protein uS8 family. Part of the 30S ribosomal subunit.

It localises to the plastid. The protein resides in the chloroplast. Functionally, one of the primary rRNA binding proteins, it binds directly to 16S rRNA central domain where it helps coordinate assembly of the platform of the 30S subunit. The polypeptide is Small ribosomal subunit protein uS8c (rps8) (Psilotum nudum (Whisk fern)).